The sequence spans 45 residues: FKBP-type peptidyl-prolyl cis-trans isomerase, chloroplastic (45 aa).

Belongs to the FKBP-type PPIase family. As to expression, expressed in leaves, but not in roots.

The protein resides in the plastid. The protein localises to the chloroplast thylakoid lumen. The catalysed reaction is [protein]-peptidylproline (omega=180) = [protein]-peptidylproline (omega=0). PPIases accelerate the folding of proteins. It catalyzes the cis-trans isomerization of proline imidic peptide bonds in oligopeptides. The chain is FKBP-type peptidyl-prolyl cis-trans isomerase, chloroplastic from Vicia faba (Broad bean).